The primary structure comprises 256 residues: 5'-nucleotidase SurE (256 aa).

Residues aspartate 9, aspartate 10, serine 42, and asparagine 99 each coordinate a divalent metal cation.

The protein belongs to the SurE nucleotidase family. A divalent metal cation serves as cofactor.

Its subcellular location is the cytoplasm. The enzyme catalyses a ribonucleoside 5'-phosphate + H2O = a ribonucleoside + phosphate. Functionally, nucleotidase that shows phosphatase activity on nucleoside 5'-monophosphates. In Symbiobacterium thermophilum (strain DSM 24528 / JCM 14929 / IAM 14863 / T), this protein is 5'-nucleotidase SurE.